We begin with the raw amino-acid sequence, 139 residues long: ATP synthase epsilon chain (139 aa).

The protein belongs to the ATPase epsilon chain family. In terms of assembly, F-type ATPases have 2 components, CF(1) - the catalytic core - and CF(0) - the membrane proton channel. CF(1) has five subunits: alpha(3), beta(3), gamma(1), delta(1), epsilon(1). CF(0) has three main subunits: a, b and c.

The protein localises to the cell membrane. Produces ATP from ADP in the presence of a proton gradient across the membrane. The protein is ATP synthase epsilon chain of Streptococcus sanguinis.